Reading from the N-terminus, the 104-residue chain is Inclusion membrane protein F (104 aa).

Helical transmembrane passes span 39–59 and 70–90; these read LVVA…SLVA and LAVL…VLFI.

Its subcellular location is the secreted. It is found in the host vacuole. It localises to the host pathogen-containing vacuole. The protein localises to the host pathogen-containing vacuole membrane. In terms of biological role, inclusion membrane protein probably involved in early modification events of the chlamydial inclusion. The sequence is that of Inclusion membrane protein F from Chlamydia trachomatis serovar L2 (strain ATCC VR-902B / DSM 19102 / 434/Bu).